The primary structure comprises 209 residues: Pyridoxine/pyridoxamine 5'-phosphate oxidase (209 aa).

Residues 7–10 and K64 each bind substrate; that span reads RADY. Residues 59 to 64, 74 to 75, and K81 contribute to the FMN site; these read RIVLLK and FT. 3 residues coordinate substrate: Y121, R125, and S129. Residues 138–139, W182, and R192 each bind FMN; that span reads QS.

The protein belongs to the pyridoxamine 5'-phosphate oxidase family. As to quaternary structure, homodimer. FMN is required as a cofactor.

It catalyses the reaction pyridoxamine 5'-phosphate + O2 + H2O = pyridoxal 5'-phosphate + H2O2 + NH4(+). The catalysed reaction is pyridoxine 5'-phosphate + O2 = pyridoxal 5'-phosphate + H2O2. It participates in cofactor metabolism; pyridoxal 5'-phosphate salvage; pyridoxal 5'-phosphate from pyridoxamine 5'-phosphate: step 1/1. Its pathway is cofactor metabolism; pyridoxal 5'-phosphate salvage; pyridoxal 5'-phosphate from pyridoxine 5'-phosphate: step 1/1. Functionally, catalyzes the oxidation of either pyridoxine 5'-phosphate (PNP) or pyridoxamine 5'-phosphate (PMP) into pyridoxal 5'-phosphate (PLP). In Haemophilus ducreyi (strain 35000HP / ATCC 700724), this protein is Pyridoxine/pyridoxamine 5'-phosphate oxidase.